The chain runs to 66 residues: Ocellatin-PT1 (66 aa).

The signal sequence occupies residues 1-22 (MAFLKKSLFLVLFLGLVSLSIC). A propeptide spanning residues 23–39 (DEEKRQDEDDDDDDDEE) is cleaved from the precursor. A Valine amide modification is found at Val-66.

As to expression, expressed by the skin glands.

The protein resides in the secreted. Has antibacterial activity against Gram-negative bacterium E.coli ATCC 25922 (MIC=300 uM) but not against S.pneumoniae ATCC 700603, S.choleraesuis ATCC 14028 or Gram-positive bacterium S.aureus ATCC 29313. Shows virtually no hemolytic activity and no cytotoxicity. This chain is Ocellatin-PT1, found in Leptodactylus pustulatus (Ceara white-lipped frog).